A 208-amino-acid polypeptide reads, in one-letter code: Imidazoleglycerol-phosphate dehydratase (208 aa).

This sequence belongs to the imidazoleglycerol-phosphate dehydratase family.

Its subcellular location is the cytoplasm. The enzyme catalyses D-erythro-1-(imidazol-4-yl)glycerol 3-phosphate = 3-(imidazol-4-yl)-2-oxopropyl phosphate + H2O. The protein operates within amino-acid biosynthesis; L-histidine biosynthesis; L-histidine from 5-phospho-alpha-D-ribose 1-diphosphate: step 6/9. This Arthrobacter sp. (strain FB24) protein is Imidazoleglycerol-phosphate dehydratase.